The sequence spans 377 residues: UPF0754 membrane protein LMHCC_0318 (377 aa).

2 consecutive transmembrane segments (helical) span residues 1–21 (MSVL…GAMT) and 357–377 (YLGG…AMWI).

The protein belongs to the UPF0754 family.

It localises to the cell membrane. The protein is UPF0754 membrane protein LMHCC_0318 of Listeria monocytogenes serotype 4a (strain HCC23).